Consider the following 232-residue polypeptide: Small ribosomal subunit protein uS3 (232 aa).

Residues 39-107 (VRQFLTKELA…PAQINIAEVR (69 aa)) form the KH type-2 domain.

This sequence belongs to the universal ribosomal protein uS3 family. As to quaternary structure, part of the 30S ribosomal subunit. Forms a tight complex with proteins S10 and S14.

Functionally, binds the lower part of the 30S subunit head. Binds mRNA in the 70S ribosome, positioning it for translation. The chain is Small ribosomal subunit protein uS3 from Yersinia pestis bv. Antiqua (strain Antiqua).